Consider the following 239-residue polypeptide: Myogenic factor 6 (239 aa).

The interval 28-59 (PGVSPLYEGNDSPLSPGQDPVPSETGCESSGE) is disordered. Residues 92–143 (DRRKAATLRERRRLKKINEAFDALKKKTVPNPNQRLPKVEILRSAINYIEKL) form the bHLH domain. Over residues 182 to 196 (CQSWQENPDHSSSQM) the composition is skewed to polar residues. Positions 182 to 239 (CQSWQENPDHSSSQMAGHREGAVLESSESSSLRRLSSIVDSISTEEPKARCPSQISEK) are disordered. Residues 204 to 223 (VLESSESSSLRRLSSIVDSI) are compositionally biased toward low complexity.

In terms of assembly, efficient DNA binding requires dimerization with another bHLH protein.

The protein resides in the nucleus. Its function is as follows. Involved in muscle differentiation (myogenic factor). Induces fibroblasts to differentiate into myoblasts. Probable sequence specific DNA-binding protein. The sequence is that of Myogenic factor 6 (myf6) from Danio rerio (Zebrafish).